The primary structure comprises 254 residues: Homeobox protein Nkx-6.3 (254 aa).

Disordered regions lie at residues 112 to 140 (QDWR…RPTF) and 191 to 228 (KSAV…DPDS). Residues 120–129 (ALSSASNTEG) are compositionally biased toward polar residues. A DNA-binding region (homeobox) is located at residues 133-192 (KKHTRPTFTGHQIFALEKTFEQTKYLAGPERARLAFSLGMSESQVKVWFQNRRTKWRKKS).

It is found in the nucleus. In terms of biological role, putative transcription factor, which may be involved in patterning of central nervous system and pancreas. The protein is Homeobox protein Nkx-6.3 (nkx6-3) of Xenopus laevis (African clawed frog).